Reading from the N-terminus, the 260-residue chain is tRNA pseudouridine synthase A (260 aa).

The active-site Nucleophile is the D51. Position 109 (Y109) interacts with substrate.

The protein belongs to the tRNA pseudouridine synthase TruA family. Homodimer.

It catalyses the reaction uridine(38/39/40) in tRNA = pseudouridine(38/39/40) in tRNA. Functionally, formation of pseudouridine at positions 38, 39 and 40 in the anticodon stem and loop of transfer RNAs. This chain is tRNA pseudouridine synthase A, found in Albidiferax ferrireducens (strain ATCC BAA-621 / DSM 15236 / T118) (Rhodoferax ferrireducens).